The sequence spans 86 residues: Large ribosomal subunit protein eL43 (86 aa).

The C4-type zinc finger occupies 38–59 (CPVCGRKAVRRISTGIWQCQKC).

The protein belongs to the eukaryotic ribosomal protein eL43 family. Zn(2+) serves as cofactor.

This Thermococcus gammatolerans (strain DSM 15229 / JCM 11827 / EJ3) protein is Large ribosomal subunit protein eL43.